Consider the following 537-residue polypeptide: Glucan 1,6-alpha-glucosidase (537 aa).

The Nucleophile role is filled by aspartate 194. The Proton donor role is filled by glutamate 236.

Belongs to the glycosyl hydrolase 13 family.

Its subcellular location is the cytoplasm. It carries out the reaction Hydrolysis of (1-&gt;6)-alpha-D-glucosidic linkages in (1-&gt;6)-alpha-D-glucans and derived oligosaccharides.. Its function is as follows. The physiological substrates may be short isomaltosaccharides. The polypeptide is Glucan 1,6-alpha-glucosidase (dexB) (Streptococcus dysgalactiae subsp. equisimilis (Streptococcus equisimilis)).